The primary structure comprises 117 residues: UPF0321 protein PJ695.01c (117 aa).

The signal sequence occupies residues 1–17 (MLLLLYICCLFLKFILA). N-linked (GlcNAc...) asparagine glycans are attached at residues Asn-39, Asn-65, Asn-71, and Asn-104.

The protein belongs to the UPF0321 family.

The protein is UPF0321 protein PJ695.01c of Schizosaccharomyces pombe (strain 972 / ATCC 24843) (Fission yeast).